A 245-amino-acid chain; its full sequence is Mannose/glucose-specific lectin (245 aa).

D87 and G107 together coordinate a carbohydrate. N119 carries N-linked (GlcNAc...) asparagine glycosylation. E129 and D131 together coordinate Mn(2+). Ca(2+) contacts are provided by D131 and F133. 2 residues coordinate a carbohydrate: S138 and N139. Residues N139 and D142 each contribute to the Ca(2+) site. 2 residues coordinate Mn(2+): D142 and H147. A carbohydrate is bound by residues G221, E222, and Q223.

The protein belongs to the leguminous lectin family. In terms of assembly, homodimer.

Functionally, mannose/glucose-specific lectin that also binds derivatives N-acetyl-D-glucosamine and alpha-methyl-D-mannopyranoside with even higher affinity. Has hemagglutinating activity towards rabbit erythrocytes. Is toxic towards brine shrimp A.nauplii. In rats, induces dose-dependent paw edema. The polypeptide is Mannose/glucose-specific lectin (Centrolobium tomentosum (Arariba)).